A 41-amino-acid polypeptide reads, in one-letter code: Photosystem I reaction center subunit IX (41 aa).

A helical transmembrane segment spans residues tyrosine 7–isoleucine 27.

Belongs to the PsaJ family.

The protein resides in the plastid. It is found in the chloroplast thylakoid membrane. May help in the organization of the PsaE and PsaF subunits. The sequence is that of Photosystem I reaction center subunit IX from Oltmannsiellopsis viridis (Marine flagellate).